We begin with the raw amino-acid sequence, 318 residues long: Acetyl-coenzyme A carboxylase carboxyl transferase subunit alpha (318 aa).

Residues Arg-39–Lys-297 form the CoA carboxyltransferase C-terminal domain.

The protein belongs to the AccA family. As to quaternary structure, acetyl-CoA carboxylase is a heterohexamer composed of biotin carboxyl carrier protein (AccB), biotin carboxylase (AccC) and two subunits each of ACCase subunit alpha (AccA) and ACCase subunit beta (AccD).

It localises to the cytoplasm. The catalysed reaction is N(6)-carboxybiotinyl-L-lysyl-[protein] + acetyl-CoA = N(6)-biotinyl-L-lysyl-[protein] + malonyl-CoA. Its pathway is lipid metabolism; malonyl-CoA biosynthesis; malonyl-CoA from acetyl-CoA: step 1/1. Functionally, component of the acetyl coenzyme A carboxylase (ACC) complex. First, biotin carboxylase catalyzes the carboxylation of biotin on its carrier protein (BCCP) and then the CO(2) group is transferred by the carboxyltransferase to acetyl-CoA to form malonyl-CoA. The chain is Acetyl-coenzyme A carboxylase carboxyl transferase subunit alpha from Bartonella tribocorum (strain CIP 105476 / IBS 506).